The chain runs to 403 residues: S-adenosylmethionine synthase (403 aa).

Gly-140–Asp-145 lines the ATP pocket.

It belongs to the AdoMet synthase 2 family. The cofactor is Mg(2+).

The enzyme catalyses L-methionine + ATP + H2O = S-adenosyl-L-methionine + phosphate + diphosphate. It participates in amino-acid biosynthesis; S-adenosyl-L-methionine biosynthesis; S-adenosyl-L-methionine from L-methionine: step 1/1. Functionally, catalyzes the formation of S-adenosylmethionine from methionine and ATP. The polypeptide is S-adenosylmethionine synthase (Sulfolobus acidocaldarius (strain ATCC 33909 / DSM 639 / JCM 8929 / NBRC 15157 / NCIMB 11770)).